A 110-amino-acid polypeptide reads, in one-letter code: NADH-quinone oxidoreductase subunit K (110 aa).

3 consecutive transmembrane segments (helical) span residues V13 to I33, I38 to I58, and V70 to V90.

The protein belongs to the complex I subunit 4L family. As to quaternary structure, NDH-1 is composed of 14 different subunits. Subunits NuoA, H, J, K, L, M, N constitute the membrane sector of the complex.

Its subcellular location is the cell inner membrane. It catalyses the reaction a quinone + NADH + 5 H(+)(in) = a quinol + NAD(+) + 4 H(+)(out). Functionally, NDH-1 shuttles electrons from NADH, via FMN and iron-sulfur (Fe-S) centers, to quinones in the respiratory chain. The immediate electron acceptor for the enzyme in this species is believed to be ubiquinone. Couples the redox reaction to proton translocation (for every two electrons transferred, four hydrogen ions are translocated across the cytoplasmic membrane), and thus conserves the redox energy in a proton gradient. The polypeptide is NADH-quinone oxidoreductase subunit K (Francisella tularensis subsp. tularensis (strain FSC 198)).